Consider the following 624-residue polypeptide: Probable Xaa-Pro aminopeptidase P (624 aa).

Mn(2+)-binding residues include Asp421, Asp432, Glu530, and Glu544.

Belongs to the peptidase M24B family. It depends on Mn(2+) as a cofactor.

The catalysed reaction is Release of any N-terminal amino acid, including proline, that is linked to proline, even from a dipeptide or tripeptide.. Catalyzes the removal of a penultimate prolyl residue from the N-termini of peptides. This Arthroderma otae (strain ATCC MYA-4605 / CBS 113480) (Microsporum canis) protein is Probable Xaa-Pro aminopeptidase P (AMPP).